Reading from the N-terminus, the 484-residue chain is MARAIMLQGTGSDVGKTVLVAGLCRLAANRGLTVRPFKPQNMSNNAAVADDGGEIGRAQWLQSLAARTPSSVHMNPVLLKPQSENGSQIIVQGRVFGQAKGRDYQRLKPQLLGAVLASFEKVADGADLVIVEGAGSPAEINLRAGDIANMGFATQAGVPVVLVGDIDRGGVIASLVGTHAILADADRAMISGYIINKFRGDVSLFDNGIRAIEGFTGWPCFGVVPWLSGAARLPAEDSVVLERLAKGGGGALKIAVPVLPRIANFDDLDPLRAEPDVELVFIRSGERLPADASLVVLPGSKSTISDLADLRAAGWDRDLFAHVRRGGRVIGICGGYQMLGRTVHDPLGLEGGTLETPGLALLDVETEMAPEKTVRNSHARSTEYDAPLAGYQIHLGMTRGPDCGRPSAIVDGVPDGALSANGLIMGTYLHGLFASDAYRTRLLQSFGLSGERRNYRESVDKALDEIAGELERYLDPRWLAGLVG.

One can recognise a GATase cobBQ-type domain in the interval 251–438 (ALKIAVPVLP…LHGLFASDAY (188 aa)). Cysteine 333 functions as the Nucleophile in the catalytic mechanism. The active site involves histidine 430.

The protein belongs to the CobB/CobQ family. CobQ subfamily.

It participates in cofactor biosynthesis; adenosylcobalamin biosynthesis. Catalyzes amidations at positions B, D, E, and G on adenosylcobyrinic A,C-diamide. NH(2) groups are provided by glutamine, and one molecule of ATP is hydrogenolyzed for each amidation. This Rhizobium etli (strain CIAT 652) protein is Cobyric acid synthase.